Reading from the N-terminus, the 539-residue chain is Chaperonin GroEL 1 (539 aa).

Residues 29-32 (TLGP), 86-90 (DGTTT), Gly-413, 478-480 (NAA), and Asp-494 contribute to the ATP site. Residues 520–539 (IVDKPAEPEDDGHGHHGHAH) form a disordered region. The span at 523 to 533 (KPAEPEDDGHG) shows a compositional bias: basic and acidic residues.

Belongs to the chaperonin (HSP60) family. As to quaternary structure, forms a cylinder of 14 subunits composed of two heptameric rings stacked back-to-back. Interacts with the co-chaperonin GroES.

The protein localises to the cytoplasm. It catalyses the reaction ATP + H2O + a folded polypeptide = ADP + phosphate + an unfolded polypeptide.. Its function is as follows. Together with its co-chaperonin GroES, plays an essential role in assisting protein folding. The GroEL-GroES system forms a nano-cage that allows encapsulation of the non-native substrate proteins and provides a physical environment optimized to promote and accelerate protein folding. This Mycobacterium ulcerans (strain Agy99) protein is Chaperonin GroEL 1.